An 872-amino-acid chain; its full sequence is MSNVTPMMQQYLKIKSEYQDCLLFFRLGDFYEMFYEDAKEASRVLEITLTKRDAKKENPIPMCGVPYHSADSYIDTLVNNGYKVAICEQMEDPKQTKGMVRREVVRIVTPGTVMEQGGVDDKQNNYILSFVMNQPEIALSYCDVSTGELKVTHFNDEATLLNEITTINPNEVVINDNISDHLKRQINMVTETITVRETLSSEIYSVNQTEHKLMYQATQLLLDYIHHTQKRDLSHIEDAVQYAAIDYMKMDFYAKRNLELTESIRLKSKKGTLLWLMDETKTPMGARRLKQWIDRPLISKEQIEARLDIVDEFSAHFIERDTLRTYLNQVYDIERLVGRVSYGNVNARDLIQLKHSISEIPNIKALLNSMNQDTLVQVNQLEPLDDLLDILEQSLVEEPPISVKDGGLFKVGFNMQLDEYLEASKNGKTWLAELQAKERQRTGIKSLKISFNKVFGYFIEITRANLQNFEPSEFGYMRKQTLSNAERFITDELKEKEDIILGAEDKAIELEYQLFVQLREEVKKYTERLQHQAKIISELDCLQSFAEIAQKYNYTRPSFSENKTLELVESRHPVVERVMDYNDYVPNNCRLDNETFIYLITGPNMSGKSTYMRQVAIISIMAQMGAYVPCKEAVLPIFDQIFTRIGAADDLVSGKSTFMVEMLEAQKALTYATEDSLIIFDEIGRGTSTYDGLALAQAMIEYVAETSHAKTLFSTHYHELTTLDQALPSLKNVHVAANEYKGELIFLHKVKDGAVDDSYGIQVAKLADLPEKVISRAQVILSEFEASAGKKSSISNLKMVENEPEINQENSNLSVEETTDTLSQKDFEQASFDLFENDQESEIELQIKNLNLSNMTPIEALVKLSELQNQLK.

602 to 609 (GPNMSGKS) serves as a coordination point for ATP.

Belongs to the DNA mismatch repair MutS family.

Its function is as follows. This protein is involved in the repair of mismatches in DNA. It is possible that it carries out the mismatch recognition step. This protein has a weak ATPase activity. The polypeptide is DNA mismatch repair protein MutS (Staphylococcus aureus (strain MRSA252)).